Reading from the N-terminus, the 97-residue chain is Large ribosomal subunit protein bL27 (97 aa).

The tract at residues 1–23 (MAHKKGASSSRNGRDSTSKRLGV) is disordered.

The protein belongs to the bacterial ribosomal protein bL27 family.

The polypeptide is Large ribosomal subunit protein bL27 (Acidothermus cellulolyticus (strain ATCC 43068 / DSM 8971 / 11B)).